A 533-amino-acid chain; its full sequence is Death domain-containing ATP nucleosidase (533 aa).

The tract at residues 1–262 is death domain; it reads MDAAAIISLL…TAAGKEEKVS (262 aa). Residues 184 to 248 are disordered; the sequence is STFVSDDATQ…TQTSTNSFNS (65 aa). The segment covering 218 to 227 has biased composition (polar residues); sequence PSAQVNQPPT. Positions 236–248 are enriched in low complexity; sequence SGSTQTSTNSFNS. Residues 263-533 form a purine nucleoside phosphorylase domain region; sequence DDVTKGIKFL…HLDDDRTIHM (271 aa).

It carries out the reaction ATP + H2O = D-ribose 5-triphosphate + adenine. It catalyses the reaction dATP + H2O = 2-deoxyribose 5-triphosphate + adenine. The C-terminal purine nucleoside phosphorylase (PNP) domain cleaves the N-glycosidic bond of ATP, and to a lesser extent dATP, to release adenine and a sugar triphosphate; has weak activity on ADP and AMP and no activity on dADP, dAMP, adenosine, deoxyadenosine or other (d)NTPs. This is Death domain-containing ATP nucleosidase (109585858) from Amphimedon queenslandica (Sponge).